The sequence spans 35 residues: Photosystem II reaction center protein Psb30 (35 aa).

The helical transmembrane segment at 7–27 threads the bilayer; sequence LIANFAALALITLAGPAVIFI.

It belongs to the Psb30/Ycf12 family. PSII is composed of 1 copy each of membrane proteins PsbA, PsbB, PsbC, PsbD, PsbE, PsbF, PsbH, PsbI, PsbJ, PsbK, PsbL, PsbM, PsbT, PsbX, PsbY, PsbZ, Psb30/Ycf12, peripheral proteins of the oxygen-evolving complex and a large number of cofactors. It forms dimeric complexes.

It localises to the plastid. The protein resides in the organellar chromatophore thylakoid membrane. Its function is as follows. A core subunit of photosystem II (PSII), probably helps stabilize the reaction center. This is Photosystem II reaction center protein Psb30 from Paulinella chromatophora.